The sequence spans 852 residues: Disks large homolog 2 (852 aa).

S-palmitoyl cysteine attachment occurs at residues cysteine 5 and cysteine 7. Serine 28 carries the post-translational modification Phosphoserine. Tyrosine 58 is modified (phosphotyrosine). A Phosphoserine modification is found at serine 65. PDZ domains lie at 98–184 (EITL…VRRR) and 193–279 (EIKL…VGKP). Phosphoserine occurs at positions 307, 328, 360, 365, 406, and 414. Residues 421–501 (KVVLHKGSTG…QTVTIIAQYQ (81 aa)) enclose the PDZ 3 domain. Tyrosine 505 bears the Phosphotyrosine mark. Serine 528, serine 530, and serine 553 each carry phosphoserine. Positions 536 to 606 (KRSLYVRAMF…PSKRRVERKE (71 aa)) constitute an SH3 domain. The Guanylate kinase-like domain maps to 662–837 (TRPVIILGPM…IYNQCKLVIE (176 aa)). A phosphotyrosine mark is found at tyrosine 732 and tyrosine 737.

This sequence belongs to the MAGUK family. Interacts through its PDZ domains with NETO1. Interacts with NOS1/nNOS through second PDZ domain. Interacts with KCNJ2/Kir2.1 (via C-terminus) through one of its PDZ domains. Interacts with KCNJ4. Interacts with FRMPD4 (via C-terminus). Interacts with LRFN1. Interacts with LRFN2 and LRFN4. Interacts with FASLG. Interacts with ADAM22. Interacts with DGKI (via PDZ-binding motif). Palmitoylation of isoform 1 and isoform 2 is not required for targeting to postsynaptic density. Detected in juxtaparanodal zones in the central nervous system and at nerve terminal plexuses of basket cells in the cerebellum (at protein level). Brain. High levels in cerebellar Purkinje cells. Expressed in pyramidal cells of the Ammons's horn and granular cells of the dentate gyrus in the hippocampus as well as cerebral cortex and striatum. High levels in dorsal horn of spinal cord.

Its subcellular location is the cell membrane. The protein resides in the postsynaptic density. It is found in the synapse. The protein localises to the cell projection. It localises to the axon. Its subcellular location is the membrane. The protein resides in the perikaryon. Its function is as follows. Required for perception of chronic pain through NMDA receptor signaling. Regulates surface expression of NMDA receptors in dorsal horn neurons of the spinal cord. Interacts with the cytoplasmic tail of NMDA receptor subunits as well as inward rectifying potassium channels. Involved in regulation of synaptic stability at cholinergic synapses. Part of the postsynaptic protein scaffold of excitatory synapses. The chain is Disks large homolog 2 (Dlg2) from Rattus norvegicus (Rat).